Here is a 122-residue protein sequence, read N- to C-terminus: Selenoprotein H (122 aa).

Lys20 carries the N6-acetyllysine modification. Residues Cys41–Sec44 constitute a cross-link (cysteinyl-selenocysteine (Cys-Sec); redox-active). A non-standard amino acid (selenocysteine) is located at residue Sec44.

It belongs to the SelWTH family.

In terms of biological role, may be involved in a redox-related process. This is Selenoprotein H from Homo sapiens (Human).